We begin with the raw amino-acid sequence, 412 residues long: Ribosomal RNA large subunit methyltransferase G (412 aa).

Positions 386–412 (KAEPHENGESSSDTPNPQSSLYGGVKR) are disordered. Positions 394 to 406 (ESSSDTPNPQSSL) are enriched in polar residues.

This sequence belongs to the methyltransferase superfamily. RlmG family.

The protein resides in the cytoplasm. It catalyses the reaction guanosine(1835) in 23S rRNA + S-adenosyl-L-methionine = N(2)-methylguanosine(1835) in 23S rRNA + S-adenosyl-L-homocysteine + H(+). Functionally, specifically methylates the guanine in position 1835 (m2G1835) of 23S rRNA. In Shewanella sediminis (strain HAW-EB3), this protein is Ribosomal RNA large subunit methyltransferase G.